Reading from the N-terminus, the 902-residue chain is Aconitate hydratase A (902 aa).

[4Fe-4S] cluster contacts are provided by cysteine 441, cysteine 507, and cysteine 510.

Belongs to the aconitase/IPM isomerase family. As to quaternary structure, monomer. [4Fe-4S] cluster is required as a cofactor.

The catalysed reaction is citrate = D-threo-isocitrate. It carries out the reaction (2S,3R)-3-hydroxybutane-1,2,3-tricarboxylate = 2-methyl-cis-aconitate + H2O. The protein operates within carbohydrate metabolism; tricarboxylic acid cycle; isocitrate from oxaloacetate: step 2/2. It functions in the pathway organic acid metabolism; propanoate degradation. Its function is as follows. Involved in the catabolism of short chain fatty acids (SCFA) via the tricarboxylic acid (TCA)(acetyl degradation route) and probably the 2-methylcitrate cycle I (propionate degradation route). Catalyzes the reversible isomerization of citrate to isocitrate via cis-aconitate. Also able to catalyze the hydration of cis-homoaconitate to yield (R)-homocitrate, but with a lower efficiency. Could catalyze the hydration of 2-methyl-cis-aconitate to yield (2R,3S)-2-methylisocitrate. The apo form of AcnA functions as a RNA-binding regulatory protein. The sequence is that of Aconitate hydratase A (acoA) from Thermus thermophilus (strain ATCC 27634 / DSM 579 / HB8).